We begin with the raw amino-acid sequence, 292 residues long: Fat storage-inducing transmembrane protein 1 (292 aa).

The Lumenal segment spans residues 1-18 (MERGPTVGAGLGAGTRVR). The helical transmembrane segment at 19–39 (ALLGCLVKVLLWVASALLYFG) threads the bilayer. At 40-54 (SEQAARLLGSPCLRR) the chain is on the cytoplasmic side. The chain crosses the membrane as a helical span at residues 55-75 (LYHAWLAAVVIFGPLLQFHVN). Topologically, residues 76–94 (SRTIFASHGNFFNIKFVNS) are lumenal. Residues 95–115 (AWGWTCTFLGGFVLLVVFLAT) form a helical membrane-spanning segment. Over 116 to 141 (RRVAVTARHLSRLVVGAAVWRGAGRA) the chain is Cytoplasmic. A helical transmembrane segment spans residues 142 to 162 (FLLIEDLTGSCFEPLPQGLLL). The Lumenal portion of the chain corresponds to 163–187 (HELPDRKSCLAAGHQWRGYTVSSHT). The active site involves H186. A helical membrane pass occupies residues 188–208 (FLLTFCCLLMAEEAAVFAKYL). Topologically, residues 209 to 220 (AHGLPAGAPLRL) are cytoplasmic. A helical transmembrane segment spans residues 221 to 241 (VFLLNVLLLGLWNFLLLCTVI). Residues 242–249 (YFHQYTHK) lie on the Lumenal side of the membrane. The active site involves H244. Residues 250-270 (VVGAAVGTFAWYLTYGSWYHQ) form a helical membrane-spanning segment. Over 271–292 (PWSPGIPGHGLFPRSRSMRKHN) the chain is Cytoplasmic.

This sequence belongs to the FIT family. FIT1 subfamily. As to expression, predominantly expressed in skeletal muscle and at lower levels in the heart (at protein level). In the heart, mRNA expression levels do not correlate well with protein levels, suggesting post-transcriptional regulation in this organ.

It is found in the endoplasmic reticulum membrane. Its function is as follows. Plays an important role in the formation of lipid droplets (LDs) which are storage organelles at the center of lipid and energy homeostasis. Directly binds to diacylglycerol (DAGs) and triacylglycerol. The protein is Fat storage-inducing transmembrane protein 1 of Mus musculus (Mouse).